A 203-amino-acid chain; its full sequence is ATP-dependent Clp protease proteolytic subunit 2 (203 aa).

Serine 100 (nucleophile) is an active-site residue. Histidine 125 is a catalytic residue.

The protein belongs to the peptidase S14 family. As to quaternary structure, fourteen ClpP subunits assemble into 2 heptameric rings which stack back to back to give a disk-like structure with a central cavity, resembling the structure of eukaryotic proteasomes.

Its subcellular location is the cytoplasm. It carries out the reaction Hydrolysis of proteins to small peptides in the presence of ATP and magnesium. alpha-casein is the usual test substrate. In the absence of ATP, only oligopeptides shorter than five residues are hydrolyzed (such as succinyl-Leu-Tyr-|-NHMec, and Leu-Tyr-Leu-|-Tyr-Trp, in which cleavage of the -Tyr-|-Leu- and -Tyr-|-Trp bonds also occurs).. Cleaves peptides in various proteins in a process that requires ATP hydrolysis. Has a chymotrypsin-like activity. Plays a major role in the degradation of misfolded proteins. This is ATP-dependent Clp protease proteolytic subunit 2 from Thermobifida fusca (strain YX).